Reading from the N-terminus, the 216-residue chain is Uracil phosphoribosyltransferase (216 aa).

5-phospho-alpha-D-ribose 1-diphosphate-binding positions include Arg-84, Arg-109, and 137–145; that span reads DPMLATGNT. Uracil is bound by residues Ile-202 and 207-209; that span reads GDA. Asp-208 lines the 5-phospho-alpha-D-ribose 1-diphosphate pocket.

The protein belongs to the UPRTase family. The cofactor is Mg(2+).

It carries out the reaction UMP + diphosphate = 5-phospho-alpha-D-ribose 1-diphosphate + uracil. It functions in the pathway pyrimidine metabolism; UMP biosynthesis via salvage pathway; UMP from uracil: step 1/1. Its activity is regulated as follows. Allosterically activated by GTP. Catalyzes the conversion of uracil and 5-phospho-alpha-D-ribose 1-diphosphate (PRPP) to UMP and diphosphate. The sequence is that of Uracil phosphoribosyltransferase from Synechocystis sp. (strain ATCC 27184 / PCC 6803 / Kazusa).